The chain runs to 96 residues: Cell division topological specificity factor (96 aa).

Belongs to the MinE family.

Prevents the cell division inhibition by proteins MinC and MinD at internal division sites while permitting inhibition at polar sites. This ensures cell division at the proper site by restricting the formation of a division septum at the midpoint of the long axis of the cell. In Nitrosococcus oceani (strain ATCC 19707 / BCRC 17464 / JCM 30415 / NCIMB 11848 / C-107), this protein is Cell division topological specificity factor.